The sequence spans 134 residues: Psoriasis susceptibility 1 candidate gene 2 protein homolog (134 aa).

The N-terminal stretch at 1–21 (MLTWKLLGLLVLCLCAGGISG) is a signal peptide. The disordered stretch occupies residues 18–134 (GISGNGDPSP…DLDPPQEEYR (117 aa)). Pro residues-rich tracts occupy residues 39–67 (PPLP…PPGS) and 81–98 (PPKP…PDDP). Over residues 122–134 (EEPDLDPPQEEYR) the composition is skewed to acidic residues.

Its subcellular location is the secreted. The chain is Psoriasis susceptibility 1 candidate gene 2 protein homolog (Psors1c2) from Mus musculus (Mouse).